The following is a 198-amino-acid chain: Prolactin (198 aa).

Intrachain disulfides connect Cys4/Cys11, Cys58/Cys173, and Cys190/Cys198.

It belongs to the somatotropin/prolactin family. Pituitary gland.

It localises to the secreted. The protein is Prolactin of Chelonia mydas (Green sea-turtle).